The following is an 80-amino-acid chain: NAD(P)H-quinone oxidoreductase subunit O (80 aa).

It belongs to the complex I NdhO subunit family. NDH-1 can be composed of about 15 different subunits; different subcomplexes with different compositions have been identified which probably have different functions.

Its subcellular location is the cellular thylakoid membrane. The enzyme catalyses a plastoquinone + NADH + (n+1) H(+)(in) = a plastoquinol + NAD(+) + n H(+)(out). It catalyses the reaction a plastoquinone + NADPH + (n+1) H(+)(in) = a plastoquinol + NADP(+) + n H(+)(out). Functionally, NDH-1 shuttles electrons from an unknown electron donor, via FMN and iron-sulfur (Fe-S) centers, to quinones in the respiratory and/or the photosynthetic chain. The immediate electron acceptor for the enzyme in this species is believed to be plastoquinone. Couples the redox reaction to proton translocation, and thus conserves the redox energy in a proton gradient. Cyanobacterial NDH-1 also plays a role in inorganic carbon-concentration. This is NAD(P)H-quinone oxidoreductase subunit O from Prochlorococcus marinus (strain MIT 9515).